Consider the following 128-residue polypeptide: MCLIWGLFSVIIASVAQLSLGFAASHLPPMTHLWDFIAALLAFGLDARILLLGLLGYLLSVFCWYKTLHKLALSKAYALLSMSYVLVWIASMVLPGWEGTFSLKALLGVACIMSGLMLIFLPTTKQRY.

Topologically, residues 1 to 2 (MC) are cytoplasmic. A helical membrane pass occupies residues 3 to 23 (LIWGLFSVIIASVAQLSLGFA). The Periplasmic segment spans residues 24-35 (ASHLPPMTHLWD). A helical membrane pass occupies residues 36 to 56 (FIAALLAFGLDARILLLGLLG). Topologically, residues 57 to 76 (YLLSVFCWYKTLHKLALSKA) are cytoplasmic. Residues 77–97 (YALLSMSYVLVWIASMVLPGW) traverse the membrane as a helical segment. The Periplasmic portion of the chain corresponds to 98–100 (EGT). A helical membrane pass occupies residues 101–121 (FSLKALLGVACIMSGLMLIFL). Topologically, residues 122–128 (PTTKQRY) are cytoplasmic.

This sequence belongs to the ArnF family. As to quaternary structure, heterodimer of ArnE and ArnF.

Its subcellular location is the cell inner membrane. Its pathway is bacterial outer membrane biogenesis; lipopolysaccharide biosynthesis. Functionally, translocates 4-amino-4-deoxy-L-arabinose-phosphoundecaprenol (alpha-L-Ara4N-phosphoundecaprenol) from the cytoplasmic to the periplasmic side of the inner membrane. The sequence is that of Probable 4-amino-4-deoxy-L-arabinose-phosphoundecaprenol flippase subunit ArnF from Shigella flexneri.